The sequence spans 175 residues: Large ribosomal subunit protein uL5 (175 aa).

It belongs to the universal ribosomal protein uL5 family. Part of the 50S ribosomal subunit; contacts the 5S rRNA and probably tRNA. Forms a bridge to the 30S subunit in the 70S ribosome.

This is one of the proteins that bind and probably mediate the attachment of the 5S RNA into the large ribosomal subunit, where it forms part of the central protuberance. In the 70S ribosome it contacts protein S13 of the 30S subunit (bridge B1b), connecting the 2 subunits; this bridge is implicated in subunit movement. May contact the P site tRNA; the 5S rRNA and some of its associated proteins might help stabilize positioning of ribosome-bound tRNAs. In Halobacterium salinarum (strain ATCC 29341 / DSM 671 / R1), this protein is Large ribosomal subunit protein uL5.